The following is a 424-amino-acid chain: Histidine--tRNA ligase (424 aa).

The protein belongs to the class-II aminoacyl-tRNA synthetase family. As to quaternary structure, homodimer.

The protein resides in the cytoplasm. The catalysed reaction is tRNA(His) + L-histidine + ATP = L-histidyl-tRNA(His) + AMP + diphosphate + H(+). This Shigella flexneri protein is Histidine--tRNA ligase.